Consider the following 555-residue polypeptide: Probable apyrase 6 (555 aa).

Over residues methionine 1–valine 10 the composition is skewed to basic residues. The tract at residues methionine 1–proline 45 is disordered. Topologically, residues methionine 1–leucine 55 are cytoplasmic. The segment covering arginine 28–proline 45 has biased composition (polar residues). A helical transmembrane segment spans residues leucine 56–phenylalanine 76. Topologically, residues serine 77–threonine 512 are extracellular. Residue valine 89–arginine 99 participates in ATP binding. Glutamate 212 acts as the Proton acceptor in catalysis. Glycine 236–glutamine 246 provides a ligand contact to ATP. Residues asparagine 267 and asparagine 348 are each glycosylated (N-linked (GlcNAc...) asparagine). Residues leucine 513–tryptophan 533 form a helical membrane-spanning segment. The Cytoplasmic segment spans residues arginine 534 to arginine 555.

It belongs to the GDA1/CD39 NTPase family. Ca(2+) is required as a cofactor. Detected in mature pollen grains (at the protein level). Also expressed in the veins and hydathode regions of rosette leaves.

It is found in the cytoplasmic vesicle membrane. It catalyses the reaction a ribonucleoside 5'-triphosphate + 2 H2O = a ribonucleoside 5'-phosphate + 2 phosphate + 2 H(+). Its function is as follows. Catalyzes the hydrolysis of phosphoanhydride bonds of nucleoside tri- and di-phosphates. Involved in the regulation of pollen and anther development. This chain is Probable apyrase 6 (APY6), found in Arabidopsis thaliana (Mouse-ear cress).